Here is a 595-residue protein sequence, read N- to C-terminus: Beta-(1--&gt;2)glucan export ATP-binding/permease protein NdvA (595 aa).

Transmembrane regions (helical) follow at residues 21–41 (FLLI…EPIL), 56–76 (LVTL…YVLV), 129–149 (IWLE…VLVP), 158–178 (LSIV…LVMQ), and 252–272 (ISIV…QLSV). The region spanning 21–301 (FLLICTANIT…ISGFINLAVS (281 aa)) is the ABC transmembrane type-1 domain. In terms of domain architecture, ABC transporter spans 335–569 (IQFHHVTYEF…DGHFYKLLKR (235 aa)). 368-375 (GPTGAGKT) contacts ATP.

This sequence belongs to the ABC transporter superfamily. Beta-(1--&gt;2)glucan exporter (TC 3.A.1.108.1) family. As to quaternary structure, homodimer.

It is found in the cell inner membrane. The catalysed reaction is [(1-&gt;2)-beta-D-glucosyl](n)(in) + ATP + H2O = [(1-&gt;2)-beta-D-glucosyl](n)(out) + ADP + phosphate + H(+). Its function is as follows. Involved in beta-(1--&gt;2)glucan export. Transmembrane domains (TMD) form a pore in the inner membrane and the ATP-binding domain (NBD) is responsible for energy generation. This chain is Beta-(1--&gt;2)glucan export ATP-binding/permease protein NdvA, found in Bartonella bacilliformis.